A 222-amino-acid chain; its full sequence is Methionine import system permease protein MetP (222 aa).

In terms of domain architecture, ABC transmembrane type-1 spans 18–212 (TYETLYMTLI…IIVFIIQIIG (195 aa)). The next 5 membrane-spanning stretches (helical) occupy residues 25–45 (TLIS…LLFL), 73–93 (FLIL…TILG), 97–117 (ALPA…EIAL), 152–172 (ISGI…AGAI), and 195–215 (FVAT…GDLI).

This sequence belongs to the binding-protein-dependent transport system permease family. CysTW subfamily. In terms of assembly, the complex is composed of two ATP-binding proteins (MetN), two transmembrane proteins (MetP) and a solute-binding protein (MetQ).

It is found in the cell membrane. Functionally, part of the ABC transporter complex MetNPQ involved in methionine import. Responsible for the translocation of the substrate across the membrane. It has also been shown to be involved in methionine sulfoxide transport. This is Methionine import system permease protein MetP (metP) from Bacillus subtilis (strain 168).